Here is a 481-residue protein sequence, read N- to C-terminus: Adenosylhomocysteinase (481 aa).

T65, D140, and E200 together coordinate substrate. Residue 201–203 (TTT) coordinates NAD(+). Substrate contacts are provided by K230 and D234. NAD(+) is bound by residues N235, 264-269 (GYGDVG), E287, N322, 343-345 (IGH), and N393.

Belongs to the adenosylhomocysteinase family. NAD(+) serves as cofactor.

The protein localises to the cytoplasm. It catalyses the reaction S-adenosyl-L-homocysteine + H2O = L-homocysteine + adenosine. It participates in amino-acid biosynthesis; L-homocysteine biosynthesis; L-homocysteine from S-adenosyl-L-homocysteine: step 1/1. Functionally, may play a key role in the regulation of the intracellular concentration of adenosylhomocysteine. The chain is Adenosylhomocysteinase from Polynucleobacter necessarius subsp. necessarius (strain STIR1).